Consider the following 395-residue polypeptide: Probable sugar efflux transporter (395 aa).

The next 12 membrane-spanning stretches (helical) occupy residues 13 to 33 (VVSL…PVAL), 48 to 68 (VGLI…PCML), 82 to 102 (IFIL…YWVL), 107 to 127 (IGVA…VVRL), 134 to 154 (AQAL…GLPL), 168 to 188 (FVLI…LLPV), 207 to 227 (PALL…FTAY), 244 to 264 (FTTI…MLFS), 272 to 292 (AGFL…LLPL), 297 to 317 (WSLS…SLGM), 331 to 351 (VAMA…ALLG), and 363 to 383 (IGYM…FTFV).

It belongs to the major facilitator superfamily. SotB (TC 2.A.1.2) family.

The protein localises to the cell inner membrane. In terms of biological role, involved in the efflux of sugars. The physiological role may be the reduction of the intracellular concentration of toxic sugars or sugar metabolites. The polypeptide is Probable sugar efflux transporter (Pectobacterium atrosepticum (strain SCRI 1043 / ATCC BAA-672) (Erwinia carotovora subsp. atroseptica)).